Consider the following 59-residue polypeptide: Cecropin-B1 (59 aa).

Positions 1–23 are cleaved as a signal peptide; it reads MNFNKLFLIVILAALLLLGQTEA. Leucine 57 carries the leucine amide modification.

This sequence belongs to the cecropin family.

It localises to the secreted. Its function is as follows. Cecropins have lytic and antibacterial activity against several Gram-positive and Gram-negative bacteria. The sequence is that of Cecropin-B1 (CECB1) from Culex pipiens pipiens (Northern house mosquito).